Reading from the N-terminus, the 485-residue chain is Subtilisin-like protease 1 (485 aa).

The N-terminal stretch at 1 to 19 (MGIFRFISISLAAVSAANA) is a signal peptide. The propeptide occupies 20 to 116 (GHILSMGHAK…VEPDTTITIH (97 aa)). An Inhibitor I9 domain is found at 34–116 (SYIVVMKDGT…VEPDTTITIH (83 aa)). In terms of domain architecture, Peptidase S8 spans 126 to 400 (SWGLARISSQ…NILINNGDAK (275 aa)). Residues Asp158 and His190 each act as charge relay system in the active site. A glycan (N-linked (GlcNAc...) asparagine) is linked at Asn251. Ser345 serves as the catalytic Charge relay system. The segment covering 377–394 (GTSSVTNPGPGTRTNILI) has biased composition (polar residues). Residues 377–462 (GTSSVTNPGP…HTPFPNDDFN (86 aa)) form a disordered region. The segment covering 409 to 418 (PSQPPKPSQP) has biased composition (pro residues). A compositionally biased stretch (low complexity) spans 419–428 (SKPQQPSEPQ). A compositionally biased stretch (pro residues) spans 433–455 (PQEPAPGQPAPAPAPVPQHPHTP).

This sequence belongs to the peptidase S8 family.

It localises to the secreted. Functionally, secreted subtilisin-like serine protease with keratinolytic activity that contributes to pathogenicity. In Arthroderma otae (strain ATCC MYA-4605 / CBS 113480) (Microsporum canis), this protein is Subtilisin-like protease 1 (SUB1).